We begin with the raw amino-acid sequence, 800 residues long: U4/U6.U5 tri-snRNP-associated protein 1 (800 aa).

Positions 1–120 are disordered; the sequence is MGSSKKHRGE…SSGDASSLSI (120 aa). The span at 32–42 shows a compositional bias: basic residues; it reads HREHKKHKHRS. The segment covering 58–101 has biased composition (basic and acidic residues); that stretch reads ERGGERGSGRRGAEAEARSSTHGRERSQAEPSERRVKREKRDDG. Low complexity predominate over residues 104-119; it reads AAASSKTSSGDASSLS. Glycyl lysine isopeptide (Lys-Gly) (interchain with G-Cter in SUMO2) cross-links involve residues Lys125 and Lys133. Lys141 participates in a covalent cross-link: Glycyl lysine isopeptide (Lys-Gly) (interchain with G-Cter in SUMO1); alternate. Residue Lys141 forms a Glycyl lysine isopeptide (Lys-Gly) (interchain with G-Cter in SUMO2); alternate linkage. Residues Lys147 and Lys188 each participate in a glycyl lysine isopeptide (Lys-Gly) (interchain with G-Cter in SUMO2) cross-link. Positions 157-231 form a coiled coil; it reads NPMALRQREE…KLLEEMDQEF (75 aa). Thr189 is modified (phosphothreonine). Lys277 is covalently cross-linked (Glycyl lysine isopeptide (Lys-Gly) (interchain with G-Cter in SUMO2)). The interval 311-330 is disordered; the sequence is PDYLPYAEDESVDDLAQQKP. Residue Ser321 is modified to Phosphoserine. Residues Lys329 and Lys336 each participate in a glycyl lysine isopeptide (Lys-Gly) (interchain with G-Cter in SUMO2) cross-link. Position 348 is a phosphoserine (Ser348). Position 392 is a phosphothreonine (Thr392). Glycyl lysine isopeptide (Lys-Gly) (interchain with G-Cter in SUMO2) cross-links involve residues Lys400 and Lys414. Positions 419–497 are disordered; it reads RADDLLPLGD…QVLEEDEAEL (79 aa). Residue Thr430 is modified to Phosphothreonine. 4 positions are modified to phosphoserine: Ser448, Ser474, Ser486, and Ser521. A coiled-coil region spans residues 490 to 533; it reads LEEDEAELELQKQLEKGRRLRQLQQLQQLRDSGEKVVEIVKKLE. Lys548 participates in a covalent cross-link: Glycyl lysine isopeptide (Lys-Gly) (interchain with G-Cter in SUMO2). Residues 571–604 form a disordered region; sequence LAGNREEQEELMDFERDEERSANGGSESDGEENI. A phosphoserine mark is found at Ser591, Ser596, Ser598, and Ser621. Glycyl lysine isopeptide (Lys-Gly) (interchain with G-Cter in SUMO2) cross-links involve residues Lys648, Lys657, and Lys684. Thr695 carries the phosphothreonine modification. Glycyl lysine isopeptide (Lys-Gly) (interchain with G-Cter in SUMO2) cross-links involve residues Lys699, Lys709, Lys723, Lys749, and Lys758. Phosphoserine is present on Ser761. At Thr764 the chain carries Phosphothreonine. Glycyl lysine isopeptide (Lys-Gly) (interchain with G-Cter in SUMO2) cross-links involve residues Lys775 and Lys780. A Phosphoserine modification is found at Ser789. A Glycyl lysine isopeptide (Lys-Gly) (interchain with G-Cter in SUMO2) cross-link involves residue Lys791.

It belongs to the SNU66/SART1 family. As to quaternary structure, identified in the spliceosome C complex. Component of the U4/U6-U5 tri-snRNP complex composed of the U4, U6 and U5 snRNAs and at least PRPF3, PRPF4, PRPF6, PRPF8, PRPF31, SNRNP200, TXNL4A, SNRNP40, DDX23, CD2BP2, PPIH, SNU13, EFTUD2, SART1 and USP39. Interacts with UBL5. Interacts with IVNS1ABP (via Kelch repeats). In terms of processing, sumoylated with SUMO2. Ubiquitously expressed.

The protein resides in the nucleus. Plays a role in mRNA splicing as a component of the U4/U6-U5 tri-snRNP, one of the building blocks of the spliceosome. May also bind to DNA. The chain is U4/U6.U5 tri-snRNP-associated protein 1 (SART1) from Homo sapiens (Human).